Reading from the N-terminus, the 485-residue chain is Protein disulfide isomerase-like 5-4 (485 aa).

In terms of domain architecture, Thioredoxin spans 114–263 (VPTGSEFHPG…LVAAMETYVA (150 aa)). C170 functions as the Nucleophile in the catalytic mechanism. A helical transmembrane segment spans residues 444–464 (FSHFITNVCAIIGGVFTVAGI).

It belongs to the protein disulfide isomerase family.

Its subcellular location is the membrane. Functionally, acts as a protein-folding catalyst that interacts with nascent polypeptides to catalyze the formation, isomerization, and reduction or oxidation of disulfide bonds. May play a role in storage protein biogenesis. The chain is Protein disulfide isomerase-like 5-4 (PDIL5-4) from Oryza sativa subsp. japonica (Rice).